Consider the following 239-residue polypeptide: Small ribosomal subunit protein uS3c (239 aa).

Residues 43–139 (IKNYIQKNRK…RLNISIEKVK (97 aa)) form the KH type-2 domain. A disordered region spans residues 50–80 (NRKKSSNRKLESDSSSEVITHNRKNDSGSSS).

Belongs to the universal ribosomal protein uS3 family. In terms of assembly, part of the 30S ribosomal subunit.

It localises to the plastid. The protein resides in the chloroplast. This chain is Small ribosomal subunit protein uS3c (rps3), found in Lolium perenne (Perennial ryegrass).